The chain runs to 158 residues: Large ribosomal subunit protein uL16 (158 aa).

This sequence belongs to the universal ribosomal protein uL16 family. Part of the 50S ribosomal subunit.

In terms of biological role, binds 23S rRNA and is also seen to make contacts with the A and possibly P site tRNAs. The chain is Large ribosomal subunit protein uL16 from Synechococcus sp. (strain CC9902).